We begin with the raw amino-acid sequence, 392 residues long: N-acetylneuraminate epimerase (392 aa).

A signal peptide spans M1 to A35. 7 Kelch repeats span residues H56 to S100, K102 to N155, T157 to N192, A193 to K238, L241 to A290, Q312 to D361, and V363 to E392. E247 functions as the Proton acceptor in the catalytic mechanism.

It belongs to the NanM family. Homodimer.

The protein localises to the periplasm. The catalysed reaction is N-acetyl-alpha-neuraminate = N-acetyl-beta-neuraminate. In terms of biological role, converts alpha-N-acetylneuranimic acid (Neu5Ac) to the beta-anomer, accelerating the equilibrium between the alpha- and beta-anomers. Probably facilitates sialidase-negative bacteria to compete successfully for limited amounts of extracellular Neu5Ac, which is likely taken up in the beta-anomer. In addition, the rapid removal of sialic acid from solution might be advantageous to the bacterium to damp down host responses. This Yersinia enterocolitica serotype O:8 / biotype 1B (strain NCTC 13174 / 8081) protein is N-acetylneuraminate epimerase.